Consider the following 387-residue polypeptide: Leucine aminopeptidase 1 (387 aa).

The signal sequence occupies residues 1 to 18; that stretch reads MKFTNLSLLALSASLASA. Residues 19–86 constitute a propeptide that is removed on maturation; it reads RFVEQHETDQ…LGTLRTSSVK (68 aa). Asn179 carries N-linked (GlcNAc...) asparagine glycosylation. Zn(2+) contacts are provided by His187, Asp206, Glu245, and Asp272. A disulfide bridge links Cys321 with Cys325. His354 provides a ligand contact to Zn(2+).

This sequence belongs to the peptidase M28 family. M28E subfamily. In terms of assembly, monomer. Zn(2+) is required as a cofactor.

It localises to the secreted. In terms of biological role, extracellular aminopeptidase that allows assimilation of proteinaceous substrates. This is Leucine aminopeptidase 1 (lap1) from Sclerotinia sclerotiorum (strain ATCC 18683 / 1980 / Ss-1) (White mold).